The primary structure comprises 520 residues: Diacylglycerol O-acyltransferase 1 (520 aa).

Disordered regions lie at residues 28-57 (RRKS…GAPA) and 72-116 (QGTA…AHRR). Residues 34–54 (DSSNGLLLSGSDNNSPSDDVG) show a composition bias toward low complexity. Gly residues predominate over residues 81–98 (NNGGGDNNGGGRGGGEGR). Helical transmembrane passes span 126–146 (AIFK…LIAV), 176–196 (WPLF…FTVE), 207–227 (PVVI…PVYV), 233–253 (SAFL…LKLV), 276–296 (VSYY…TLCY), 317–337 (KLVI…NPIV), and 365–385 (VWLC…AELL). The FYXDWWN motif motif lies at 392 to 398 (FYKDWWN). 3 helical membrane-spanning segments follow: residues 434 to 454 (LAII…IAVP), 457 to 477 (LFKL…FITN), and 487 to 507 (VGNM…CVLL). The active site involves H447.

Belongs to the membrane-bound acyltransferase family. Sterol o-acyltransferase subfamily. In terms of assembly, interacts with LPCAT2 and LPAT2. As to expression, ubiquitous. Highest expression in young developing seeds.

Its subcellular location is the plastid. It is found in the chloroplast membrane. The protein localises to the endoplasmic reticulum membrane. The catalysed reaction is an acyl-CoA + a 1,2-diacyl-sn-glycerol = a triacyl-sn-glycerol + CoA. It carries out the reaction 1,2-di-(9Z-octadecenoyl)-sn-glycerol + (9Z)-octadecenoyl-CoA = 1,2,3-tri-(9Z-octadecenoyl)-glycerol + CoA. The protein operates within glycerolipid metabolism; triacylglycerol biosynthesis. Partially inhibited by niacin. Its function is as follows. Major contributor to triacylglycerol (TAG) synthesis and oil accumulation in seeds. Catalyzes the acylation of the sn-3 hydroxy group of sn-1,2-diacylglycerol using acyl-CoA. Can use palmitoyl-CoA and oleoyl-CoA as substrates. Can use oleoyl-CoA and linoleoyl-CoA as substrates. Has substrate preference for oleoyl-CoA compared to linoleoyl-CoA. Has complementary functions with PDAT1 that are essential for triacylglycerol synthesis and normal development of both seeds and pollen. In Arabidopsis thaliana (Mouse-ear cress), this protein is Diacylglycerol O-acyltransferase 1.